The sequence spans 262 residues: Snake venom serine protease (262 aa).

A signal peptide spans 1–18; it reads MVLIRVLANLLILQLSYA. The propeptide occupies 19-24; sequence QKSSEL. The 229-residue stretch at 25–253 folds into the Peptidase S1 domain; the sequence is VIGGDECNIN…YTEWIQSIIA (229 aa). 6 disulfide bridges follow: cysteine 31–cysteine 167, cysteine 50–cysteine 66, cysteine 102–cysteine 260, cysteine 146–cysteine 214, cysteine 178–cysteine 193, and cysteine 204–cysteine 229. Catalysis depends on charge relay system residues histidine 65 and aspartate 114. Asparagine 125 and asparagine 158 each carry an N-linked (GlcNAc...) asparagine glycan. Serine 208 functions as the Charge relay system in the catalytic mechanism.

Belongs to the peptidase S1 family. Snake venom subfamily. Monomer. As to expression, expressed by the venom gland.

It is found in the secreted. Functionally, snake venom serine protease that may act in the hemostasis system of the prey. This chain is Snake venom serine protease, found in Crotalus durissus durissus (Central American rattlesnake).